A 246-amino-acid polypeptide reads, in one-letter code: tRNA pseudouridine synthase A (246 aa).

The active-site Nucleophile is the D52. Y111 is a substrate binding site.

This sequence belongs to the tRNA pseudouridine synthase TruA family. In terms of assembly, homodimer.

It catalyses the reaction uridine(38/39/40) in tRNA = pseudouridine(38/39/40) in tRNA. Formation of pseudouridine at positions 38, 39 and 40 in the anticodon stem and loop of transfer RNAs. The chain is tRNA pseudouridine synthase A from Fervidobacterium nodosum (strain ATCC 35602 / DSM 5306 / Rt17-B1).